Reading from the N-terminus, the 63-residue chain is Cytochrome c oxidase subunit 7C, mitochondrial (63 aa).

A mitochondrion-targeting transit peptide spans 1–16 (MWGQGVRRFTTSVVRR). Over 17 to 33 (SHYEEGPGKNLPFSVEN) the chain is Mitochondrial matrix. Lys25 carries the post-translational modification N6-acetyllysine; alternate. Lys25 is modified (N6-succinyllysine; alternate). A helical membrane pass occupies residues 34–60 (KWRLLAMMTLYLGSGFAAPFFIVRHQL). At 61–63 (LKK) the chain is on the mitochondrial intermembrane side.

Belongs to the cytochrome c oxidase VIIc family. Component of the cytochrome c oxidase (complex IV, CIV), a multisubunit enzyme composed of 14 subunits. The complex is composed of a catalytic core of 3 subunits MT-CO1, MT-CO2 and MT-CO3, encoded in the mitochondrial DNA, and 11 supernumerary subunits COX4I, COX5A, COX5B, COX6A, COX6B, COX6C, COX7A, COX7B, COX7C, COX8 and NDUFA4, which are encoded in the nuclear genome. The complex exists as a monomer or a dimer and forms supercomplexes (SCs) in the inner mitochondrial membrane with NADH-ubiquinone oxidoreductase (complex I, CI) and ubiquinol-cytochrome c oxidoreductase (cytochrome b-c1 complex, complex III, CIII), resulting in different assemblies (supercomplex SCI(1)III(2)IV(1) and megacomplex MCI(2)III(2)IV(2)). Interacts with RAB5IF.

The protein resides in the mitochondrion inner membrane. Its pathway is energy metabolism; oxidative phosphorylation. Component of the cytochrome c oxidase, the last enzyme in the mitochondrial electron transport chain which drives oxidative phosphorylation. The respiratory chain contains 3 multisubunit complexes succinate dehydrogenase (complex II, CII), ubiquinol-cytochrome c oxidoreductase (cytochrome b-c1 complex, complex III, CIII) and cytochrome c oxidase (complex IV, CIV), that cooperate to transfer electrons derived from NADH and succinate to molecular oxygen, creating an electrochemical gradient over the inner membrane that drives transmembrane transport and the ATP synthase. Cytochrome c oxidase is the component of the respiratory chain that catalyzes the reduction of oxygen to water. Electrons originating from reduced cytochrome c in the intermembrane space (IMS) are transferred via the dinuclear copper A center (CU(A)) of subunit 2 and heme A of subunit 1 to the active site in subunit 1, a binuclear center (BNC) formed by heme A3 and copper B (CU(B)). The BNC reduces molecular oxygen to 2 water molecules using 4 electrons from cytochrome c in the IMS and 4 protons from the mitochondrial matrix. The protein is Cytochrome c oxidase subunit 7C, mitochondrial (COX7C) of Carlito syrichta (Philippine tarsier).